The sequence spans 192 residues: Large ribosomal subunit protein uL3 (192 aa).

This sequence belongs to the universal ribosomal protein uL3 family. Part of the 50S ribosomal subunit. Forms a cluster with proteins L14 and L19.

Functionally, one of the primary rRNA binding proteins, it binds directly near the 3'-end of the 23S rRNA, where it nucleates assembly of the 50S subunit. In Wolinella succinogenes (strain ATCC 29543 / DSM 1740 / CCUG 13145 / JCM 31913 / LMG 7466 / NCTC 11488 / FDC 602W) (Vibrio succinogenes), this protein is Large ribosomal subunit protein uL3 (rplC).